Here is a 175-residue protein sequence, read N- to C-terminus: Protein FAM89A (175 aa).

Residues 141 to 175 (FQEQGSLQDGQHHGSPRDQSPLTHLSSSDWILESI) are disordered. Residues 157–169 (RDQSPLTHLSSSD) show a composition bias toward polar residues.

Belongs to the FAM89 family.

The polypeptide is Protein FAM89A (Fam89a) (Mus musculus (Mouse)).